Here is a 72-residue protein sequence, read N- to C-terminus: Mitotic-spindle organizing protein 1 (72 aa).

The protein belongs to the MOZART1 family. Part of the gamma-tubulin complex.

The protein resides in the cytoplasm. It is found in the cytoskeleton. The protein localises to the microtubule organizing center. Its subcellular location is the centrosome. It localises to the spindle. Required for gamma-tubulin complex recruitment to the centrosome. This Xenopus laevis (African clawed frog) protein is Mitotic-spindle organizing protein 1 (mzt1).